Reading from the N-terminus, the 146-residue chain is Large ribosomal subunit protein uL15 (146 aa).

Basic and acidic residues predominate over residues 1–13; sequence MKLHELKAAEGSR. Residues 1 to 61 are disordered; sequence MKLHELKAAE…GGQTPLFRRM (61 aa). 2 stretches are compositionally biased toward gly residues: residues 23–35 and 42–52; these read TSSGNGKTSGRGQ and SGGGVRLGFEG.

It belongs to the universal ribosomal protein uL15 family. Part of the 50S ribosomal subunit.

In terms of biological role, binds to the 23S rRNA. This is Large ribosomal subunit protein uL15 from Streptococcus uberis (strain ATCC BAA-854 / 0140J).